Consider the following 808-residue polypeptide: Potassium transporter 5 (808 aa).

At M1–S65 the chain is on the cytoplasmic side. Residues L66–Y86 form a helical membrane-spanning segment. Over E87 to G102 the chain is Extracellular. The chain crosses the membrane as a helical span at residues V103–V123. At L124–K189 the chain is on the cytoplasmic side. A helical membrane pass occupies residues I190 to T210. Residues P211–G221 lie on the Extracellular side of the membrane. Residues I222–F242 traverse the membrane as a helical segment. Residues C243–K251 lie on the Cytoplasmic side of the membrane. A helical transmembrane segment spans residues V252–L272. Topologically, residues Y273–G302 are extracellular. Residues W303 to L323 form a helical membrane-spanning segment. At G324 to N327 the chain is on the cytoplasmic side. A helical transmembrane segment spans residues V328–A348. At G349–V379 the chain is on the extracellular side. Residues V380–I400 traverse the membrane as a helical segment. Residues S401 to Q424 are Cytoplasmic-facing. The chain crosses the membrane as a helical span at residues V425 to F445. Residues K446–G456 lie on the Extracellular side of the membrane. A helical membrane pass occupies residues I457 to V477. Over W478–M482 the chain is Cytoplasmic. A helical membrane pass occupies residues I483–V503. At L504 to G510 the chain is on the extracellular side. A helical transmembrane segment spans residues G511–I531. Residues H532–I808 are Cytoplasmic-facing. Residues L699–K722 form a disordered region.

Belongs to the HAK/KUP transporter (TC 2.A.72.3) family. As to expression, expressed in the roots.

It localises to the cell membrane. The enzyme catalyses K(+)(in) = K(+)(out). In terms of biological role, high-affinity potassium transporter that functions under low potassium conditions. Involved in the positive regulation of salt tolerance under salt stress. This Manihot esculenta (Cassava) protein is Potassium transporter 5.